The chain runs to 142 residues: Nucleoside diphosphate kinase (142 aa).

The ATP site is built by Lys-11, Phe-59, Arg-87, Thr-93, Arg-104, and Asn-114. The active-site Pros-phosphohistidine intermediate is His-117.

This sequence belongs to the NDK family. As to quaternary structure, homotetramer. Requires Mg(2+) as cofactor.

Its subcellular location is the cytoplasm. It carries out the reaction a 2'-deoxyribonucleoside 5'-diphosphate + ATP = a 2'-deoxyribonucleoside 5'-triphosphate + ADP. It catalyses the reaction a ribonucleoside 5'-diphosphate + ATP = a ribonucleoside 5'-triphosphate + ADP. In terms of biological role, major role in the synthesis of nucleoside triphosphates other than ATP. The ATP gamma phosphate is transferred to the NDP beta phosphate via a ping-pong mechanism, using a phosphorylated active-site intermediate. This Wigglesworthia glossinidia brevipalpis protein is Nucleoside diphosphate kinase.